Reading from the N-terminus, the 293-residue chain is 33 kDa chaperonin (293 aa).

2 cysteine pairs are disulfide-bonded: Cys236-Cys238 and Cys269-Cys272.

Belongs to the HSP33 family. In terms of processing, under oxidizing conditions two disulfide bonds are formed involving the reactive cysteines. Under reducing conditions zinc is bound to the reactive cysteines and the protein is inactive.

It localises to the cytoplasm. Redox regulated molecular chaperone. Protects both thermally unfolding and oxidatively damaged proteins from irreversible aggregation. Plays an important role in the bacterial defense system toward oxidative stress. In Lactobacillus delbrueckii subsp. bulgaricus (strain ATCC BAA-365 / Lb-18), this protein is 33 kDa chaperonin.